The following is a 387-amino-acid chain: ATP phosphoribosyltransferase regulatory subunit (387 aa).

It belongs to the class-II aminoacyl-tRNA synthetase family. HisZ subfamily. Heteromultimer composed of HisG and HisZ subunits.

The protein resides in the cytoplasm. It functions in the pathway amino-acid biosynthesis; L-histidine biosynthesis; L-histidine from 5-phospho-alpha-D-ribose 1-diphosphate: step 1/9. Its function is as follows. Required for the first step of histidine biosynthesis. May allow the feedback regulation of ATP phosphoribosyltransferase activity by histidine. This is ATP phosphoribosyltransferase regulatory subunit from Psychrobacter cryohalolentis (strain ATCC BAA-1226 / DSM 17306 / VKM B-2378 / K5).